A 469-amino-acid chain; its full sequence is Glutamate--tRNA ligase 1 (469 aa).

The 'HIGH' region signature appears at 10–20 (PSPTGYLHIGG). Zn(2+) contacts are provided by cysteine 99, cysteine 101, cysteine 126, and aspartate 128. The 'KMSKS' region signature appears at 237 to 241 (RLSKR). Position 240 (lysine 240) interacts with ATP.

Belongs to the class-I aminoacyl-tRNA synthetase family. Glutamate--tRNA ligase type 1 subfamily. Monomer. Zn(2+) serves as cofactor.

It is found in the cytoplasm. The enzyme catalyses tRNA(Glu) + L-glutamate + ATP = L-glutamyl-tRNA(Glu) + AMP + diphosphate. Catalyzes the attachment of glutamate to tRNA(Glu) in a two-step reaction: glutamate is first activated by ATP to form Glu-AMP and then transferred to the acceptor end of tRNA(Glu). The chain is Glutamate--tRNA ligase 1 from Coxiella burnetii (strain RSA 331 / Henzerling II).